Consider the following 128-residue polypeptide: Aspartate 1-decarboxylase (128 aa).

S25 functions as the Schiff-base intermediate with substrate; via pyruvic acid in the catalytic mechanism. A Pyruvic acid (Ser) modification is found at S25. T57 contributes to the substrate binding site. The active-site Proton donor is the Y58. Substrate is bound at residue 73–75 (GSA).

It belongs to the PanD family. Heterooctamer of four alpha and four beta subunits. The cofactor is pyruvate. Is synthesized initially as an inactive proenzyme, which is activated by self-cleavage at a specific serine bond to produce a beta-subunit with a hydroxyl group at its C-terminus and an alpha-subunit with a pyruvoyl group at its N-terminus.

The protein localises to the cytoplasm. The catalysed reaction is L-aspartate + H(+) = beta-alanine + CO2. It functions in the pathway cofactor biosynthesis; (R)-pantothenate biosynthesis; beta-alanine from L-aspartate: step 1/1. Catalyzes the pyruvoyl-dependent decarboxylation of aspartate to produce beta-alanine. The chain is Aspartate 1-decarboxylase from Burkholderia thailandensis (strain ATCC 700388 / DSM 13276 / CCUG 48851 / CIP 106301 / E264).